The chain runs to 1118 residues: MTSIYTSTEPTNSAFTTEDYKPQLVEGVNSVLVIGSGGLSIGQAGEFDYSGSQAIKALKEDNKFTILVNPNIATNQTSHSLADKIYYLPVTPEYITYIIELERPDAILLTFGGQTGLNCGVALDESGVLAKYNVKVLGTPIKTLITSEDRDLFASALKDINIPIAESFACETVDEALEAAERVKYPVIVRSAYALGGLGSGFANNASEMKELAAQSLSLAPQILVEKSLKGWKEVEYEVVRDRVGNCITVCNMENFDPLGVHTGDSMVFAPSQTLSDEEFHMLRSAAIKIIRHLGVIGECNVQYALQPDGLDYRVIEVNARLSRSSALASKATGYPLAYTAAKIGLGYTLPELPNPITKTTVANFEPSLDYIVAKIPKWDLSKFQYVDRSIGSSMKSVGEVMAIGRNYEEAFQKALRQVDPSLLGFQGSTEFGDQLDEALRTPTDRRVLAIGQALIHENYTVERVNELSKIDKWFLYKCMNIVNIYKELESVKSLSDLSKDLLQRAKKLGFSDKQIAVTINKHASTNINELEIRSLRKTLGIIPFVKRIDTLAAEFPAQTNYLYTTYNATKNDVEFNENGMLVLGSGVYRIGSSVEFDWCAVNTAKTLRDQGKKTIMINYNPETVSTDFDEVDRLYFEELSYERVMDIYELEQSEGCIISVGGQLPQNIALKLYDNGCNIMGTNPNDIDRAENRHKFSSILDSIDVDQPEWSELTSVEEAKLFASKVNYPVLIRPSYVLSGAAMSVVNNEEELKAKLTLASDVSPDHPVVMSKFIEGAQEIDVDAVAYNGNVLVHAISEHVENAGVHSGDASLVLPPQHLSDDVKIALKDIADKVAKAWKITGPFNMQIIKDGEHTLKVIECNIRASRSFPFVSKVLGVNFIEIAVKAFLGGDIVPKPVDLMLNKKYDYVATKVPQFSFTRLAGADPFLGVEMASTGEVASFGRDLIESYWTAIQSTMNFHVPLPPSGILFGGDTSREYLGQVASIVATIGYRIYTTNETTKTYLQEHIKEKNAKVSLIKFPKNDKRKLRELFQEYDIKAVFNLASKRAESTDDVDYIMRRNAIDFAIPLFNEPQTALLFAKCLKAKIAEKIKILESHDVIVPPEVRSWDEFIGFKAY.

Residues 23-420 (QLVEGVNSVL…AFQKALRQVD (398 aa)) form a carboxyphosphate synthetic domain region. Residues arginine 150, arginine 190, glycine 196, glycine 197, lysine 227, leucine 229, glutamate 234, glycine 260, valine 261, histidine 262, glutamine 303, and glutamate 317 each contribute to the ATP site. An ATP-grasp 1 domain is found at 154-346 (ASALKDINIP…LAYTAAKIGL (193 aa)). Mg(2+)-binding residues include glutamine 303, glutamate 317, and asparagine 319. 3 residues coordinate Mn(2+): glutamine 303, glutamate 317, and asparagine 319. The interval 421 to 573 (PSLLGFQGST…YTTYNATKND (153 aa)) is oligomerization domain. The segment at 574-958 (VEFNENGMLV…SYWTAIQSTM (385 aa)) is carbamoyl phosphate synthetic domain. The region spanning 698–890 (SSILDSIDVD…FIEIAVKAFL (193 aa)) is the ATP-grasp 2 domain. The ATP site is built by arginine 734, lysine 773, isoleucine 775, glutamate 780, glycine 805, valine 806, histidine 807, serine 808, glutamine 848, and glutamate 861. Residues glutamine 848, glutamate 861, and asparagine 863 each contribute to the Mg(2+) site. Mn(2+)-binding residues include glutamine 848, glutamate 861, and asparagine 863. The segment at 959–1102 (NFHVPLPPSG…KILESHDVIV (144 aa)) is allosteric domain. The 159-residue stretch at 960 to 1118 (FHVPLPPSGI…WDEFIGFKAY (159 aa)) folds into the MGS-like domain.

This sequence belongs to the CarB family. Heterodimer composed of 2 chains; the small (or glutamine) chain promotes the hydrolysis of glutamine to ammonia, which is used by the large (or ammonia) chain to synthesize carbamoyl phosphate. The cofactor is Mg(2+). Requires Mn(2+) as cofactor.

The protein resides in the cytoplasm. It carries out the reaction hydrogencarbonate + L-glutamine + 2 ATP + H2O = carbamoyl phosphate + L-glutamate + 2 ADP + phosphate + 2 H(+). It catalyses the reaction hydrogencarbonate + NH4(+) + 2 ATP = carbamoyl phosphate + 2 ADP + phosphate + 2 H(+). It participates in amino-acid biosynthesis; L-arginine biosynthesis; carbamoyl phosphate from bicarbonate: step 1/1. Large subunit of the arginine-specific carbamoyl phosphate synthase (CPSase). CPSase catalyzes the formation of carbamoyl phosphate from the ammonia moiety of glutamine, hydrogencarbonate, and phosphate donated by ATP, constituting the first step of 2 biosynthetic pathways, one leading to arginine and/or urea and the other to pyrimidine nucleotides. The large subunit (synthetase) binds the substrates ammonia (free or transferred from glutamine from the small subunit), hydrogencarbonate and ATP and carries out an ATP-coupled ligase reaction, activating hydrogencarbonate by forming carboxy phosphate which reacts with ammonia to form carbamoyl phosphate. This chain is Carbamoyl phosphate synthase arginine-specific large chain (CPA2), found in Saccharomyces cerevisiae (strain ATCC 204508 / S288c) (Baker's yeast).